Here is a 382-residue protein sequence, read N- to C-terminus: MTEFWLISAPGEKTCQQTWEKLMAATTKNNNLSTNAKFNIPDLKVGTLDVLVGLSDELAKLDAFVEGAVKKVAQYMADVLEDSRDKVQENLLANGVDLVTYITRFQWDMAKYPIKQSLKNISEIIAKGVTQIDNDLKARASAYNNLKGNLQNLERKNAGSLITRSLAEIVKKDDFVLDSEYLITLLVVVPKNNYTDWMKEYETLSEMVVPRSSNVLSEDQDSYLCNVTLFRKAVDDFRHKARENKFVVRDFQYNEEEMKADKEEMNRLSTDKKKQFGPLVRWLKVNFSEAFIAWIHVKALRVFVESVLRYGLPVNFQAMLLQPNKKTMKKLREVLNDLYKHLDSSAASIIDAPMDIPGLNLSQQEYYPYVYYKIDCNLLEFK.

T2 is modified (N-acetylthreonine).

The protein belongs to the V-ATPase C subunit family. V-ATPase is a heteromultimeric enzyme made up of two complexes: the ATP-hydrolytic V1 complex and the proton translocation V0 complex. The V1 complex consists of three catalytic AB heterodimers that form a heterohexamer, three peripheral stalks each consisting of EG heterodimers, one central rotor including subunits D and F, and the regulatory subunits C and H. The proton translocation complex V0 consists of the proton transport subunit a, a ring of proteolipid subunits c9c'', rotary subunit d, subunits e and f, and two accessory subunits.

Subunit of the V1 complex of vacuolar(H+)-ATPase (V-ATPase), a multisubunit enzyme composed of a peripheral complex (V1) that hydrolyzes ATP and a membrane integral complex (V0) that translocates protons. V-ATPase is responsible for acidifying and maintaining the pH of intracellular compartments and in some cell types, is targeted to the plasma membrane, where it is responsible for acidifying the extracellular environment. Subunit C is necessary for the assembly of the catalytic sector of the enzyme and is likely to have a specific function in its catalytic activity. In Xenopus laevis (African clawed frog), this protein is V-type proton ATPase subunit C 1 (atp6v1c1).